Consider the following 168-residue polypeptide: Co-chaperone protein HscB homolog (168 aa).

Residues 5–77 form the J domain; sequence DYFSLFGLPS…MLRARYLCES (73 aa).

Belongs to the HscB family. Interacts with HscA and stimulates its ATPase activity.

In terms of biological role, co-chaperone involved in the maturation of iron-sulfur cluster-containing proteins. Seems to help targeting proteins to be folded toward HscA. The chain is Co-chaperone protein HscB homolog from Bordetella avium (strain 197N).